The primary structure comprises 294 residues: MALLTPQGVKEVFQLQRPQGRERLRRLLNWEEFDEQRDSRRSILLDTLYESIIFAVGKGFPWVEVAQVVKFTEELLRETKGCSITEAVTILGNKLRDYRGHFNTTHLLALCDYFHHTFIRHYKLYQYVLGQDQQVDLTVAHLEVCMPPHPLPLAEGMDRDLWIHEQQVATLTEAEAQKRADVLLLKEALRLERENSLQKAFAAAAPAQPGQVLERQELESLICQAVHTQMELLQELLQRQIQNTFAILDLKLQKKTLNLNAPTPIPPPITSHAGQEEALKPQRASKGKKAKARK.

The segment at 259 to 294 (LNAPTPIPPPITSHAGQEEALKPQRASKGKKAKARK) is disordered. The segment covering 283–294 (RASKGKKAKARK) has biased composition (basic residues).

This is an uncharacterized protein from Homo sapiens (Human).